Here is a 258-residue protein sequence, read N- to C-terminus: MNNLNDPPNWNIRPNSRADGGDGSRWNYALLVPMLGLAAFRWIWSRESQKEIEKEKEACRQRTAAFQRDLEARYHATISESRRAVARLSLELEKEQNRTTSYREALISQGRKMVEEKKLLEQERAQVLQEKRQPLRSAYLSCLDKEADWQRRARLLLREFEEALAERQSIYCSLVLPRGRRLDIEKGLLVRASTDPLAVDLEMAAGLSDIFKHDTHCGGVWNTSKRQNGRLMWLYLQYWELVVELKKFKRVEKAILEK.

The stretch at 50-170 (KEIEKEKEAC…EEALAERQSI (121 aa)) forms a coiled coil.

In Sus scrofa (Pig), this protein is Coiled-coil domain-containing protein 127 (CCDC127).